A 114-amino-acid chain; its full sequence is Turripeptide OL22 (114 aa).

Contains 6 disulfide bonds. Expressed by the venom duct.

It is found in the secreted. Functionally, acts as a neurotoxin by inhibiting an ion channel. The protein is Turripeptide OL22 of Iotyrris olangoensis (Sea snail).